An 817-amino-acid polypeptide reads, in one-letter code: Sorting nexin-29 (817 aa).

Residues Ser37–Lys181 form the RUN domain. Ser269, Ser292, Ser293, Ser331, and Ser345 each carry phosphoserine. The disordered stretch occupies residues Asp271–Arg299. Disordered regions lie at residues Lys344–Gly381 and Ala417–Ala460. The span at Asp347–Val358 shows a compositional bias: acidic residues. Residues Gly369 to Leu378 are compositionally biased toward basic and acidic residues. The span at Ser445–Ala460 shows a compositional bias: low complexity. A Phosphoserine modification is found at Ser451. Positions Met466–Val546 form a coiled coil. Residue Ser641 is modified to Phosphoserine. Thr643 is subject to Phosphothreonine. Residues Ser644 and Ser648 each carry the phosphoserine modification. Positions Ala658–Gly781 constitute a PX domain. Positions Leu784 to Leu817 are disordered.

It belongs to the sorting nexin family.

In Bos taurus (Bovine), this protein is Sorting nexin-29 (SNX29).